Here is a 427-residue protein sequence, read N- to C-terminus: Phosphatidylserine decarboxylase proenzyme 1, mitochondrial (427 aa).

Residues 1-77 (MRSYLRFSDR…RRFVYKLDQA (77 aa)) constitute a mitochondrion transit peptide. The Mitochondrial matrix portion of the chain corresponds to 78–88 (VTAALGPNGRY). Residues 89-107 (IAMVGMTASAVLLTFHYKF) form a helical membrane-spanning segment. The Mitochondrial intermembrane segment spans residues 108-427 (REVIAATDNV…TEDERLFAFY (320 aa)). Residues Asp-210, His-268, and Ser-379 each act as charge relay system; for autoendoproteolytic cleavage activity in the active site. The active-site Schiff-base intermediate with substrate; via pyruvic acid; for decarboxylase activity is the Ser-379. Ser-379 bears the Pyruvic acid (Ser); by autocatalysis mark.

This sequence belongs to the phosphatidylserine decarboxylase family. PSD-B subfamily. Eukaryotic type I sub-subfamily. In terms of assembly, heterodimer of a large membrane-associated beta subunit and a small pyruvoyl-containing alpha subunit. Requires pyruvate as cofactor. Is synthesized initially as an inactive proenzyme. Formation of the active enzyme involves a self-maturation process in which the active site pyruvoyl group is generated from an internal serine residue via an autocatalytic post-translational modification. Two non-identical subunits are generated from the proenzyme in this reaction, and the pyruvate is formed at the N-terminus of the alpha chain, which is derived from the carboxyl end of the proenzyme. The autoendoproteolytic cleavage occurs by a canonical serine protease mechanism, in which the side chain hydroxyl group of the serine supplies its oxygen atom to form the C-terminus of the beta chain, while the remainder of the serine residue undergoes an oxidative deamination to produce ammonia and the pyruvoyl prosthetic group on the alpha chain. During this reaction, the Ser that is part of the protease active site of the proenzyme becomes the pyruvoyl prosthetic group, which constitutes an essential element of the active site of the mature decarboxylase.

The protein localises to the mitochondrion. It localises to the mitochondrion inner membrane. The catalysed reaction is a 1,2-diacyl-sn-glycero-3-phospho-L-serine + H(+) = a 1,2-diacyl-sn-glycero-3-phosphoethanolamine + CO2. The protein operates within phospholipid metabolism; phosphatidylethanolamine biosynthesis; phosphatidylethanolamine from CDP-diacylglycerol: step 2/2. Its function is as follows. Catalyzes the formation of phosphatidylethanolamine (PtdEtn) from phosphatidylserine (PtdSer). Plays a central role in phospholipid metabolism and in the interorganelle trafficking of phosphatidylserine. The sequence is that of Phosphatidylserine decarboxylase proenzyme 1, mitochondrial from Toxoplasma gondii (strain ATCC 50853 / GT1).